Here is a 189-residue protein sequence, read N- to C-terminus: MTEVLPKNIEYCEVCTFPPEYCEFGLSFKRCKEWLQENQPELFEKLYSADALANATSTLSLEKEQKISQEMEKKQAKEEAKLERELQKKLSSKVTIKRIERNKRKHVISISGLEVFNIDMKKLAKTFASKFATGASVTKNAEKKDEIIVQGDVSDEAKDYIEKLLQEKALDEVKVEQIDEKKKKKPPAP.

The 72-residue stretch at 94–165 (VTIKRIERNK…EAKDYIEKLL (72 aa)) folds into the SUI1 domain.

This sequence belongs to the DENR family. Interacts with the 40S ribosomal subunit.

The protein localises to the cytoplasm. In Debaryomyces hansenii (strain ATCC 36239 / CBS 767 / BCRC 21394 / JCM 1990 / NBRC 0083 / IGC 2968) (Yeast), this protein is Translation machinery-associated protein 22 (TMA22).